The sequence spans 221 residues: Glutathione S-transferase A3 (221 aa).

Ala-2 is modified (N-acetylalanine). Residues 3–83 (GKPVLHYFDG…YIASKYNLYG (81 aa)) form the GST N-terminal domain. The residue at position 4 (Lys-4) is an N6-succinyllysine. Glutathione-binding positions include Tyr-9, Arg-45, 54 to 55 (QV), and 67 to 68 (QT). The 123-residue stretch at 85–207 (DMKERAIIDM…LQPGSQRKPF (123 aa)) folds into the GST C-terminal domain.

As to quaternary structure, homodimer.

It localises to the cytoplasm. The enzyme catalyses RX + glutathione = an S-substituted glutathione + a halide anion + H(+). It catalyses the reaction androst-5-ene-3,17-dione = androst-4-ene-3,17-dione. It carries out the reaction pregn-5-ene-3,20-dione = progesterone. In terms of biological role, conjugation of reduced glutathione to a wide number of exogenous and endogenous hydrophobic electrophiles. Catalyzes isomerization reactions that contribute to the biosynthesis of steroid hormones. Efficiently catalyze obligatory double-bond isomerizations of delta(5)-androstene-3,17-dione and delta(5)-pregnene-3,20-dione, precursors to testosterone and progesterone, respectively. Has a high catalytic activity for aflatoxin B1-8,9 epoxide. This chain is Glutathione S-transferase A3, found in Mus musculus (Mouse).